Consider the following 420-residue polypeptide: Glucose-1-phosphate adenylyltransferase (420 aa).

Alpha-D-glucose 1-phosphate contacts are provided by residues Tyr107, Gly173, 188-189 (EK), and Ser206.

Belongs to the bacterial/plant glucose-1-phosphate adenylyltransferase family. As to quaternary structure, homotetramer.

It catalyses the reaction alpha-D-glucose 1-phosphate + ATP + H(+) = ADP-alpha-D-glucose + diphosphate. The protein operates within glycan biosynthesis; glycogen biosynthesis. Functionally, involved in the biosynthesis of ADP-glucose, a building block required for the elongation reactions to produce glycogen. Catalyzes the reaction between ATP and alpha-D-glucose 1-phosphate (G1P) to produce pyrophosphate and ADP-Glc. The polypeptide is Glucose-1-phosphate adenylyltransferase (Shewanella sp. (strain MR-4)).